Consider the following 439-residue polypeptide: Glutamine synthetase (439 aa).

The GS beta-grasp domain occupies 13-98 (ENVRFIRLQF…VICDVYTPDG (86 aa)). The region spanning 105–439 (PRYRLRRMME…NWELQRYLYL (335 aa)) is the GS catalytic domain. 2 residues coordinate Mg(2+): Glu128 and Glu130. Residue Glu180 coordinates ATP. Mg(2+) is bound by residues Glu185 and Glu192. Residues 236–237 (NG) and Gly237 contribute to the L-glutamate site. His241 contributes to the Mg(2+) binding site. ATP contacts are provided by residues 243-245 (HMS) and Ser245. L-glutamate is bound by residues Arg294, Glu300, and Arg312. ATP contacts are provided by Arg312, Arg317, and Lys324. A Mg(2+)-binding site is contributed by Glu329. Arg331 contributes to the L-glutamate binding site.

The protein belongs to the glutamine synthetase family. Oligomer of 12 subunits arranged in the form of two hexagons. In its feedback-inhibited form, interacts with TnrA in order to block its DNA-binding activity. The cofactor is Mg(2+).

It is found in the cytoplasm. The catalysed reaction is L-glutamate + NH4(+) + ATP = L-glutamine + ADP + phosphate + H(+). Its activity is regulated as follows. Inhibited by glutamine. Functionally, glutamine synthetase (GS) is an unusual multitasking protein that functions as an enzyme, a transcription coregulator, and a chaperone in ammonium assimilation and in the regulation of genes involved in nitrogen metabolism. It catalyzes the ATP-dependent biosynthesis of glutamine from glutamate and ammonia. Feedback-inhibited GlnA also interacts with and regulates the activity of the transcriptional regulator TnrA. During nitrogen limitation, TnrA is in its DNA-binding active state and turns on the transcription of genes required for nitrogen assimilation. Under conditions of nitrogen excess, feedback-inhibited GlnA forms a stable complex with TnrA, which inhibits its DNA-binding activity. In contrast, feedback-inhibited GlnA acts as a chaperone to stabilize the DNA-binding activity of GlnR, which represses the transcription of nitrogen assimilation genes. In Thermotoga maritima (strain ATCC 43589 / DSM 3109 / JCM 10099 / NBRC 100826 / MSB8), this protein is Glutamine synthetase.